The following is a 181-amino-acid chain: Organ-specific protein S2 (181 aa).

Tandem repeats lie at residues 59–84 (HAKE…DNEI), 85–110 (HAKE…DNEI), 111–136 (HANE…DNEI), and 137–162 (HANE…DNEI). Residues 59–162 (HAKENMGAIG…NASAYGDNEI (104 aa)) form a 4 X 26 AA tandem repeats region. The tract at residues 94–181 (GEFEPRPNAS…PRPSMTKYNA (88 aa)) is disordered.

The protein to organ specific protein P4. Expressed in stems.

This Pisum sativum (Garden pea) protein is Organ-specific protein S2.